The chain runs to 276 residues: Undecaprenyl-diphosphatase 2 (276 aa).

Helical transmembrane passes span 1 to 21, 44 to 64, 87 to 107, 114 to 134, 150 to 170, 190 to 210, 222 to 242, and 251 to 271; these read MSLW…LFPV, QLLP…LWYF, GHLM…GLLL, VFHD…LLWL, MTFK…IPGF, AAEF…VLEL, DALL…RFLM, and LASF…WFML.

This sequence belongs to the UppP family.

It is found in the cell inner membrane. The catalysed reaction is di-trans,octa-cis-undecaprenyl diphosphate + H2O = di-trans,octa-cis-undecaprenyl phosphate + phosphate + H(+). Its function is as follows. Catalyzes the dephosphorylation of undecaprenyl diphosphate (UPP). Confers resistance to bacitracin. This is Undecaprenyl-diphosphatase 2 from Burkholderia lata (strain ATCC 17760 / DSM 23089 / LMG 22485 / NCIMB 9086 / R18194 / 383).